We begin with the raw amino-acid sequence, 90 residues long: ATP synthase subunit c (90 aa).

The next 2 membrane-spanning stretches (helical) occupy residues 17–37 (PLAY…AGVV) and 70–90 (LAIV…IIFV).

Belongs to the ATPase C chain family. F-type ATPases have 2 components, F(1) - the catalytic core - and F(0) - the membrane proton channel. F(1) has five subunits: alpha(3), beta(3), gamma(1), delta(1), epsilon(1). F(0) has three main subunits: a(1), b(2) and c(10-14). The alpha and beta chains form an alternating ring which encloses part of the gamma chain. F(1) is attached to F(0) by a central stalk formed by the gamma and epsilon chains, while a peripheral stalk is formed by the delta and b chains.

The protein resides in the cell membrane. Functionally, f(1)F(0) ATP synthase produces ATP from ADP in the presence of a proton or sodium gradient. F-type ATPases consist of two structural domains, F(1) containing the extramembraneous catalytic core and F(0) containing the membrane proton channel, linked together by a central stalk and a peripheral stalk. During catalysis, ATP synthesis in the catalytic domain of F(1) is coupled via a rotary mechanism of the central stalk subunits to proton translocation. Key component of the F(0) channel; it plays a direct role in translocation across the membrane. A homomeric c-ring of between 10-14 subunits forms the central stalk rotor element with the F(1) delta and epsilon subunits. In Metamycoplasma arthritidis (strain 158L3-1) (Mycoplasma arthritidis), this protein is ATP synthase subunit c.